A 527-amino-acid polypeptide reads, in one-letter code: Plant-specific TFIIB-related protein PTF2 (527 aa).

Residues 1–30 (MRCKRCNGSNFERDEDTGNSYCGGCGTLRE) form a TFIIB-type zinc finger.

As to quaternary structure, can form homodimer. Interacts with TBP2. As to expression, expressed in shoot apical meristems, root tips, primordia of lateral roots, inflorescences, developing pollen grains and embryos.

The protein localises to the nucleus. In terms of biological role, plant-specific TFIIB-related protein that plays important roles in pollen germination and embryogenesis, possibly by regulating gene expression through interaction with TBP2 and the subunits of RNA polymerases. Binds double-stranded DNA in vitro. This Arabidopsis thaliana (Mouse-ear cress) protein is Plant-specific TFIIB-related protein PTF2.